Here is a 221-residue protein sequence, read N- to C-terminus: Adenylate kinase (221 aa).

Glycine 10–threonine 15 is an ATP binding site. The tract at residues serine 30–valine 59 is NMP. AMP contacts are provided by residues threonine 31, arginine 36, glycine 57–valine 59, glycine 85–arginine 88, and glutamine 92. Residues glycine 122–aspartate 159 are LID. ATP contacts are provided by residues arginine 123 and threonine 132–tyrosine 133. The AMP site is built by arginine 156 and arginine 167. Residue glycine 207 coordinates ATP.

Belongs to the adenylate kinase family. Monomer.

The protein resides in the cytoplasm. It catalyses the reaction AMP + ATP = 2 ADP. The protein operates within purine metabolism; AMP biosynthesis via salvage pathway; AMP from ADP: step 1/1. Functionally, catalyzes the reversible transfer of the terminal phosphate group between ATP and AMP. Plays an important role in cellular energy homeostasis and in adenine nucleotide metabolism. The sequence is that of Adenylate kinase from Cupriavidus metallidurans (strain ATCC 43123 / DSM 2839 / NBRC 102507 / CH34) (Ralstonia metallidurans).